We begin with the raw amino-acid sequence, 84 residues long: Polyketide-8 synthase acyl carrier protein 1 (84 aa).

Residues 7–82 enclose the Carrier domain; that stretch reads AARKQEIKEI…GVYVVVSEAA (76 aa). Ser42 is modified (O-(pantetheine 4'-phosphoryl)serine).

In terms of processing, 4'-phosphopantetheine is transferred from CoA to a specific serine of the apo-ACP-like protein.

Its function is as follows. Acyl carrier protein. This is Polyketide-8 synthase acyl carrier protein 1 from Streptomyces avermitilis (strain ATCC 31267 / DSM 46492 / JCM 5070 / NBRC 14893 / NCIMB 12804 / NRRL 8165 / MA-4680).